Here is a 214-residue protein sequence, read N- to C-terminus: Probable transaldolase (214 aa).

Catalysis depends on lysine 83, which acts as the Schiff-base intermediate with substrate.

Belongs to the transaldolase family. Type 3B subfamily.

The protein localises to the cytoplasm. It carries out the reaction D-sedoheptulose 7-phosphate + D-glyceraldehyde 3-phosphate = D-erythrose 4-phosphate + beta-D-fructose 6-phosphate. The protein operates within carbohydrate degradation; pentose phosphate pathway; D-glyceraldehyde 3-phosphate and beta-D-fructose 6-phosphate from D-ribose 5-phosphate and D-xylulose 5-phosphate (non-oxidative stage): step 2/3. Transaldolase is important for the balance of metabolites in the pentose-phosphate pathway. This chain is Probable transaldolase, found in Streptococcus equi subsp. zooepidemicus (strain MGCS10565).